We begin with the raw amino-acid sequence, 748 residues long: Catalase-peroxidase (748 aa).

Positions 91-242 form a cross-link, tryptophyl-tyrosyl-methioninium (Trp-Tyr) (with M-268); it reads WHSAGTYRIG…LAAVQMGLIY (152 aa). The active-site Proton acceptor is His-92. A disordered region spans residues 194 to 223; that stretch reads DRYGKGKGSSSQGEIPADAHRHGQEQARTA. Positions 242 to 268 form a cross-link, tryptophyl-tyrosyl-methioninium (Tyr-Met) (with W-91); it reads YVNPEGPEGNPDPLAAAHDIRETFARM. His-283 provides a ligand contact to heme b. The tract at residues 288-310 is disordered; sequence THGAGDAKHVGREPEGEDMDSQG. Over residues 290 to 301 the composition is skewed to basic and acidic residues; that stretch reads GAGDAKHVGREP.

This sequence belongs to the peroxidase family. Peroxidase/catalase subfamily. As to quaternary structure, homodimer or homotetramer. The cofactor is heme b. In terms of processing, formation of the three residue Trp-Tyr-Met cross-link is important for the catalase, but not the peroxidase activity of the enzyme.

It carries out the reaction H2O2 + AH2 = A + 2 H2O. It catalyses the reaction 2 H2O2 = O2 + 2 H2O. Bifunctional enzyme with both catalase and broad-spectrum peroxidase activity. This chain is Catalase-peroxidase, found in Herbaspirillum seropedicae.